Here is a 288-residue protein sequence, read N- to C-terminus: ATP synthase gamma chain (288 aa).

This sequence belongs to the ATPase gamma chain family. In terms of assembly, F-type ATPases have 2 components, CF(1) - the catalytic core - and CF(0) - the membrane proton channel. CF(1) has five subunits: alpha(3), beta(3), gamma(1), delta(1), epsilon(1). CF(0) has three main subunits: a, b and c.

It localises to the cell inner membrane. Functionally, produces ATP from ADP in the presence of a proton gradient across the membrane. The gamma chain is believed to be important in regulating ATPase activity and the flow of protons through the CF(0) complex. The polypeptide is ATP synthase gamma chain (Vibrio vulnificus (strain CMCP6)).